A 243-amino-acid polypeptide reads, in one-letter code: Adenosylcobinamide-GDP ribazoletransferase (243 aa).

Helical transmembrane passes span 31-51 (LLFY…LNIA), 57-77 (LLLH…ALHL), 109-129 (IAVV…LALI), 135-155 (MALI…FLTT), and 188-208 (LVIA…VFIW).

The protein belongs to the CobS family. Requires Mg(2+) as cofactor.

It localises to the cell inner membrane. The catalysed reaction is alpha-ribazole + adenosylcob(III)inamide-GDP = adenosylcob(III)alamin + GMP + H(+). The enzyme catalyses alpha-ribazole 5'-phosphate + adenosylcob(III)inamide-GDP = adenosylcob(III)alamin 5'-phosphate + GMP + H(+). It functions in the pathway cofactor biosynthesis; adenosylcobalamin biosynthesis; adenosylcobalamin from cob(II)yrinate a,c-diamide: step 7/7. Joins adenosylcobinamide-GDP and alpha-ribazole to generate adenosylcobalamin (Ado-cobalamin). Also synthesizes adenosylcobalamin 5'-phosphate from adenosylcobinamide-GDP and alpha-ribazole 5'-phosphate. This chain is Adenosylcobinamide-GDP ribazoletransferase, found in Pseudomonas fluorescens (strain Pf0-1).